Consider the following 513-residue polypeptide: MATAPATEKKAPAKKAAAPKAAAPKKAAAPKAAAPVGAATGRIAQVIGAVVDVQFTGELPAILNALETDNNGNRLVLEVAQHLGENTVRTIAMDATDGLTRGQPVRDTGAQISVPVGPQTLGRILNVIGEPIDERGPVNSDMTAPIHAKAPEFVDQSTEASILVTGIKVIDLIAPYAKGGKIGLFGGAGVGKTVLIQELINNIAKGHGGVSVFAGVGERTREGNDLYHEFLDAGVIAKDADGNPTPDGSKVALVFGQMNEPPGARARVALSGLTMAEYFRDQEGQDVLFFVDNIFRFTQAGSEVSALLGRIPSAVGYQPTLSTDMGALQERITSTTKGSITSVQAIYVPADDLTDPAPATSFAHLDATTTLSRAISELGIYPAVDPLDSTSRVLTPAIVGQEHYETARRVQETLQKYKSLQDIIAILGMDELSEEDKLVVARARKIQRFLSQPFHVAEVFTGIPGKFVPIEETVKSFKAVVDGEYDHLPEAAFYMVGGIDEAVAKAAKLAEEA.

A disordered region spans residues Met-1 to Ala-29. Low complexity predominate over residues Lys-14 to Ala-29. Gly-186–Thr-193 provides a ligand contact to ATP.

It belongs to the ATPase alpha/beta chains family. As to quaternary structure, F-type ATPases have 2 components, CF(1) - the catalytic core - and CF(0) - the membrane proton channel. CF(1) has five subunits: alpha(3), beta(3), gamma(1), delta(1), epsilon(1). CF(0) has three main subunits: a(1), b(2) and c(9-12). The alpha and beta chains form an alternating ring which encloses part of the gamma chain. CF(1) is attached to CF(0) by a central stalk formed by the gamma and epsilon chains, while a peripheral stalk is formed by the delta and b chains.

The protein resides in the cell inner membrane. It catalyses the reaction ATP + H2O + 4 H(+)(in) = ADP + phosphate + 5 H(+)(out). Produces ATP from ADP in the presence of a proton gradient across the membrane. The catalytic sites are hosted primarily by the beta subunits. The chain is ATP synthase subunit beta from Sphingopyxis alaskensis (strain DSM 13593 / LMG 18877 / RB2256) (Sphingomonas alaskensis).